The chain runs to 370 residues: Probable aspartic-type endopeptidase ARB_04018 (370 aa).

The first 21 residues, 1–21 (MWHSPFSTAFTLFLGFFTLTL), serve as a signal peptide directing secretion. N-linked (GlcNAc...) asparagine glycosylation is found at asparagine 80 and asparagine 102. In terms of domain architecture, Peptidase A1 spans 94 to 367 (FVNEITIGND…DHDGPKMGFA (274 aa)). The active site involves aspartate 110. The N-linked (GlcNAc...) asparagine glycan is linked to asparagine 251. The active site involves aspartate 261. A glycan (N-linked (GlcNAc...) asparagine) is linked at asparagine 298.

Belongs to the peptidase A1 family.

The protein resides in the secreted. Its function is as follows. Probable aspartic-type endopeptidase which contributes to virulence. This chain is Probable aspartic-type endopeptidase ARB_04018, found in Arthroderma benhamiae (strain ATCC MYA-4681 / CBS 112371) (Trichophyton mentagrophytes).